The following is a 491-amino-acid chain: Peptidoglycan D,D-transpeptidase PbpA (491 aa).

Over 1 to 8 (MNTSLRRV) the chain is Cytoplasmic. The helical; Signal-anchor for type II membrane protein transmembrane segment at 9 to 29 (AVAIMVLIVLLLANATVTQVF) threads the bilayer. The Periplasmic segment spans residues 30 to 491 (AADGLRADPR…TIAAALREGS (462 aa)). Positions 160–484 (GSVVALEPST…AAPIGRATIA (325 aa)) are transpeptidase. Residue serine 222 is the Acyl-ester intermediate of the active site.

This sequence belongs to the transpeptidase family.

The protein resides in the cell inner membrane. The catalysed reaction is Preferential cleavage: (Ac)2-L-Lys-D-Ala-|-D-Ala. Also transpeptidation of peptidyl-alanyl moieties that are N-acyl substituents of D-alanine.. It participates in cell wall biogenesis; peptidoglycan biosynthesis. In terms of biological role, transpeptidase that catalyzes cross-linking of the peptidoglycan cell wall. Required for the regulation of cell length. This chain is Peptidoglycan D,D-transpeptidase PbpA (pbpA), found in Mycolicibacterium smegmatis (strain ATCC 700084 / mc(2)155) (Mycobacterium smegmatis).